The primary structure comprises 520 residues: BTB/POZ domain-containing protein At3g50780 (520 aa).

The interval Ser43–Ser68 is disordered. Positions Ala127–Leu196 constitute a BTB domain.

It functions in the pathway protein modification; protein ubiquitination. May act as a substrate-specific adapter of an E3 ubiquitin-protein ligase complex (CUL3-RBX1-BTB) which mediates the ubiquitination and subsequent proteasomal degradation of target proteins. This is BTB/POZ domain-containing protein At3g50780 from Arabidopsis thaliana (Mouse-ear cress).